Reading from the N-terminus, the 126-residue chain is uncharacterized protein (126 aa).

Positions 1-23 (MLKKLIMGFFLLILLGIAGVAVM) are cleaved as a signal peptide.

This is an uncharacterized protein from Archaeoglobus fulgidus (strain ATCC 49558 / DSM 4304 / JCM 9628 / NBRC 100126 / VC-16).